We begin with the raw amino-acid sequence, 216 residues long: Sporozoite antigen (216 aa).

Residues Q194–W216 are disordered.

The polypeptide is Sporozoite antigen (Eimeria tenella (Coccidian parasite)).